The following is a 359-amino-acid chain: Gap junction alpha-5 protein (359 aa).

At 1–19 (MGDWSFLGEFLEEVHKHST) the chain is on the cytoplasmic side. A helical transmembrane segment spans residues 20–40 (VIGKVWLTVLFIFRMLVLGTA). Residues 41 to 76 (AESSWGDEQADFLCDTMQPGCENVCYDQAFPISHIR) lie on the Extracellular side of the membrane. Residues 77 to 97 (YWVLQVIFVSTPSLVYLGHAV) traverse the membrane as a helical segment. At 98–165 (HMVRVQEKRK…CSILIRTTME (68 aa)) the chain is on the cytoplasmic side. Residues 166-186 (VAFIVGQYLLYGVFLDTLHVC) traverse the membrane as a helical segment. Residues 187–206 (RRSPCPHPVNCYVSRPTEKN) lie on the Extracellular side of the membrane. Residues 207–227 (VFIVFMLAVAGLSLFLSLAEL) form a helical membrane-spanning segment. Over 228-359 (YHLGWKKIRQ…SKARSDDLSV (132 aa)) the chain is Cytoplasmic. 2 disordered regions span residues 285 to 305 (SNKM…VRSQ) and 317 to 359 (RYAQ…DLSV). Serine 354 and serine 358 each carry phosphoserine.

Belongs to the connexin family. Alpha-type (group II) subfamily. As to quaternary structure, a connexon is composed of a hexamer of connexins.

It localises to the cell membrane. The protein localises to the cell junction. It is found in the gap junction. In terms of biological role, one gap junction consists of a cluster of closely packed pairs of transmembrane channels, the connexons, through which materials of low MW diffuse from one cell to a neighboring cell. The sequence is that of Gap junction alpha-5 protein (GJA5) from Bos taurus (Bovine).